The sequence spans 476 residues: tRNA(Ile)-lysidine synthase (476 aa).

30 to 35 (SGGPDS) serves as a coordination point for ATP.

It belongs to the tRNA(Ile)-lysidine synthase family.

The protein resides in the cytoplasm. It carries out the reaction cytidine(34) in tRNA(Ile2) + L-lysine + ATP = lysidine(34) in tRNA(Ile2) + AMP + diphosphate + H(+). Ligates lysine onto the cytidine present at position 34 of the AUA codon-specific tRNA(Ile) that contains the anticodon CAU, in an ATP-dependent manner. Cytidine is converted to lysidine, thus changing the amino acid specificity of the tRNA from methionine to isoleucine. The protein is tRNA(Ile)-lysidine synthase of Bacillus cereus (strain ATCC 14579 / DSM 31 / CCUG 7414 / JCM 2152 / NBRC 15305 / NCIMB 9373 / NCTC 2599 / NRRL B-3711).